Reading from the N-terminus, the 748-residue chain is LPS-assembly protein LptD (748 aa).

The N-terminal stretch at 1-19 is a signal peptide; it reads MSKTWGILMLSVLSAPSLA.

This sequence belongs to the LptD family. In terms of assembly, component of the lipopolysaccharide transport and assembly complex. Interacts with LptE and LptA.

The protein localises to the cell outer membrane. Its function is as follows. Together with LptE, is involved in the assembly of lipopolysaccharide (LPS) at the surface of the outer membrane. In Pseudoalteromonas translucida (strain TAC 125), this protein is LPS-assembly protein LptD.